A 541-amino-acid chain; its full sequence is Glutamine-dependent NAD(+) synthetase (541 aa).

A CN hydrolase domain is found at 4–243; that stretch reads FKIALAQFSP…EELYYSEFDI (240 aa). Catalysis depends on E44, which acts as the Proton acceptor; for glutaminase activity. Catalysis depends on K111, which acts as the For glutaminase activity. Position 117 (Y117) interacts with L-glutamine. The active-site Nucleophile; for glutaminase activity is C147. 2 residues coordinate L-glutamine: S173 and K179. Position 286–293 (286–293) interacts with ATP; the sequence is GLSGGIDS. N369 is a deamido-NAD(+) binding site. T393 serves as a coordination point for ATP. The deamido-NAD(+) site is built by E398 and K510.

It in the C-terminal section; belongs to the NAD synthetase family.

The enzyme catalyses deamido-NAD(+) + L-glutamine + ATP + H2O = L-glutamate + AMP + diphosphate + NAD(+) + H(+). It participates in cofactor biosynthesis; NAD(+) biosynthesis; NAD(+) from deamido-NAD(+) (L-Gln route): step 1/1. Its function is as follows. Catalyzes the ATP-dependent amidation of deamido-NAD to form NAD. Uses L-glutamine as a nitrogen source. In vitro, can also use ammonia as donor with comparable specific activity, but cannot use nicotinate mononucleotide (NaMN) as substrate. The protein is Glutamine-dependent NAD(+) synthetase of Acinetobacter baylyi (strain ATCC 33305 / BD413 / ADP1).